Here is a 537-residue protein sequence, read N- to C-terminus: Tegument protein BRRF2 (537 aa).

Disordered stretches follow at residues 321-366 (RPRF…AVPP), 378-398 (AKQN…ETSP), 414-466 (SKQH…DEEF), and 486-537 (GLRV…LSVV). A compositionally biased stretch (polar residues) spans 334-347 (EPQQTCSQLTSRGN). Residues 423–441 (SSQAAPSFSSVAPVASLSG) are compositionally biased toward low complexity. The span at 492 to 517 (DEDEDGSEDGEFSDLDLSDSDHEGDE) shows a compositional bias: acidic residues.

Belongs to the lymphocryptovirus BRRF2 family.

It is found in the virion tegument. The polypeptide is Tegument protein BRRF2 (Homo sapiens (Human)).